Reading from the N-terminus, the 1642-residue chain is Cortactin-binding protein 2 (1642 aa).

Disordered stretches follow at residues 1 to 27, 203 to 222, 366 to 433, 446 to 471, and 491 to 611; these read MATD…AEAA, KKKT…RSTE, IGAS…HPGL, GSNA…SPTS, and RFTS…PSID. Residues 119-276 are a coiled coil; it reads RKMQERMSTQ…EQLKRGTDSK (158 aa). A compositionally biased stretch (polar residues) spans 385 to 394; that stretch reads GPSTGSTADL. Residues 395 to 407 show a composition bias toward low complexity; sequence TSSPTPVPSTVSP. Residue R491 is modified to Asymmetric dimethylarginine. Over residues 497–506 the composition is skewed to pro residues; the sequence is AGAPPRPGAP. Polar residues predominate over residues 576-586; the sequence is TVASPPSTLPQ. 6 ANK repeats span residues 702-732, 736-765, 769-798, 802-831, 835-864, and 904-934; these read GRPT…DINY, DGHS…QVNV, NGFT…NINH, GGQT…DRSV, DGWT…PAHG, and EGWT…EPER. The tract at residues 1440–1469 is disordered; that stretch reads ESGAWRKVSTSPRKKSGRFSSPTWNKPDLS. S1513 carries the phosphoserine modification. The interval 1546-1642 is disordered; the sequence is RRFDSSGNNP…NSRDLEPTQK (97 aa). Polar residues-rich tracts occupy residues 1552 to 1563 and 1571 to 1588; these read GNNPVFSATVNN and KEVS…SNSK. The segment covering 1613–1627 has biased composition (low complexity); the sequence is SQNTKRSSSSSNTRQ.

As to quaternary structure, interacts with CTTN/cortactin SH3 domain. Interacts with STRN, STRN4/zinedin and MOB4/phocein; this interactions mediate the association with the STRIPAK core complex and may regulate dendritic spine distribution of the STRIPAK complex in hippocampal neurons. Activation of glutamate receptors weakens the interaction with STRN and STRN4.

Its subcellular location is the cytoplasm. The protein localises to the cell cortex. It is found in the cell projection. It localises to the dendritic spine. Its function is as follows. Regulates the dendritic spine distribution of CTTN/cortactin in hippocampal neurons, and thus controls dendritic spinogenesis and dendritic spine maintenance. Associates with the striatin-interacting phosphatase and kinase (STRIPAK) core complex to regulate dendritic spine distribution of the STRIPAK complex in hippocampal neurons. The polypeptide is Cortactin-binding protein 2 (CTTNBP2) (Muntiacus reevesi (Reeves' muntjac)).